The sequence spans 570 residues: Sulfite reductase [NADPH] hemoprotein beta-component (570 aa).

Cys-434, Cys-440, Cys-479, and Cys-483 together coordinate [4Fe-4S] cluster. Cys-483 lines the siroheme pocket.

It belongs to the nitrite and sulfite reductase 4Fe-4S domain family. In terms of assembly, alpha(8)-beta(8). The alpha component is a flavoprotein, the beta component is a hemoprotein. Requires siroheme as cofactor. It depends on [4Fe-4S] cluster as a cofactor.

The catalysed reaction is hydrogen sulfide + 3 NADP(+) + 3 H2O = sulfite + 3 NADPH + 4 H(+). The protein operates within sulfur metabolism; hydrogen sulfide biosynthesis; hydrogen sulfide from sulfite (NADPH route): step 1/1. Component of the sulfite reductase complex that catalyzes the 6-electron reduction of sulfite to sulfide. This is one of several activities required for the biosynthesis of L-cysteine from sulfate. The sequence is that of Sulfite reductase [NADPH] hemoprotein beta-component from Salmonella enteritidis PT4 (strain P125109).